The primary structure comprises 224 residues: Ribonuclease T (224 aa).

Residues 20 to 195 (VVIDVETAGF…YDTQKTAELF (176 aa)) enclose the Exonuclease domain. 4 residues coordinate Mg(2+): D23, E25, H182, and D187. The active-site Proton donor/acceptor is H182.

The protein belongs to the RNase T family. Homodimer. It depends on Mg(2+) as a cofactor.

In terms of biological role, trims short 3' overhangs of a variety of RNA species, leaving a one or two nucleotide 3' overhang. Responsible for the end-turnover of tRNA: specifically removes the terminal AMP residue from uncharged tRNA (tRNA-C-C-A). Also appears to be involved in tRNA biosynthesis. This Vibrio cholerae serotype O1 (strain ATCC 39315 / El Tor Inaba N16961) protein is Ribonuclease T.